Reading from the N-terminus, the 478-residue chain is Bifunctional protein HldE (478 aa).

Residues 1-318 (MKVTLPDFRQ…ENAIRGRADT (318 aa)) are ribokinase. 195-198 (NLSE) lines the ATP pocket. Aspartate 264 is a catalytic residue. Positions 344–478 (MTNGCFDILH…NTIKANASKS (135 aa)) are cytidylyltransferase.

In the N-terminal section; belongs to the carbohydrate kinase PfkB family. It in the C-terminal section; belongs to the cytidylyltransferase family. As to quaternary structure, homodimer.

It carries out the reaction D-glycero-beta-D-manno-heptose 7-phosphate + ATP = D-glycero-beta-D-manno-heptose 1,7-bisphosphate + ADP + H(+). It catalyses the reaction D-glycero-beta-D-manno-heptose 1-phosphate + ATP + H(+) = ADP-D-glycero-beta-D-manno-heptose + diphosphate. It functions in the pathway nucleotide-sugar biosynthesis; ADP-L-glycero-beta-D-manno-heptose biosynthesis; ADP-L-glycero-beta-D-manno-heptose from D-glycero-beta-D-manno-heptose 7-phosphate: step 1/4. It participates in nucleotide-sugar biosynthesis; ADP-L-glycero-beta-D-manno-heptose biosynthesis; ADP-L-glycero-beta-D-manno-heptose from D-glycero-beta-D-manno-heptose 7-phosphate: step 3/4. Its function is as follows. Catalyzes the phosphorylation of D-glycero-D-manno-heptose 7-phosphate at the C-1 position to selectively form D-glycero-beta-D-manno-heptose-1,7-bisphosphate. Catalyzes the ADP transfer from ATP to D-glycero-beta-D-manno-heptose 1-phosphate, yielding ADP-D-glycero-beta-D-manno-heptose. This is Bifunctional protein HldE from Pectobacterium carotovorum subsp. carotovorum (strain PC1).